Consider the following 121-residue polypeptide: B-box domain protein 31 (121 aa).

The B box-type; atypical zinc finger occupies 26 to 72 (SVPVRCELCDGDASVFCEADSAFLCRKCDRWVHGANFLAWRHVRRVL). Residues 117–121 (PFVFL) carry the PFVFL motif.

In terms of tissue distribution, highly expressed in shoot apical meristems and in vascular tissues of leaves. Also detected in petioles.

Its function is as follows. Developmental regulator acting by forming heterodimeric complexes, that sequester CO and CO-like (COL) proteins into non-functional complexes. Involved in the CO-mediated long-day flowering-promotion pathway. Engages CO and the transcriptional repressor TPL in a tripartite complex. This is B-box domain protein 31 from Arabidopsis thaliana (Mouse-ear cress).